Reading from the N-terminus, the 98-residue chain is NADH-ubiquinone oxidoreductase chain 4L (98 aa).

3 consecutive transmembrane segments (helical) span residues 1–21 (MSIV…GMLI), 29–49 (SLLC…LIIL), and 61–81 (IILL…LVMV).

The protein belongs to the complex I subunit 4L family. In terms of assembly, core subunit of respiratory chain NADH dehydrogenase (Complex I) which is composed of 45 different subunits.

It is found in the mitochondrion inner membrane. The catalysed reaction is a ubiquinone + NADH + 5 H(+)(in) = a ubiquinol + NAD(+) + 4 H(+)(out). In terms of biological role, core subunit of the mitochondrial membrane respiratory chain NADH dehydrogenase (Complex I) which catalyzes electron transfer from NADH through the respiratory chain, using ubiquinone as an electron acceptor. Part of the enzyme membrane arm which is embedded in the lipid bilayer and involved in proton translocation. The chain is NADH-ubiquinone oxidoreductase chain 4L (MT-ND4L) from Herpestes javanicus (Small Indian mongoose).